The primary structure comprises 414 residues: Histidine--tRNA ligase (414 aa).

It belongs to the class-II aminoacyl-tRNA synthetase family. As to quaternary structure, homodimer.

It is found in the cytoplasm. The catalysed reaction is tRNA(His) + L-histidine + ATP = L-histidyl-tRNA(His) + AMP + diphosphate + H(+). The sequence is that of Histidine--tRNA ligase from Synechococcus sp. (strain RCC307).